A 249-amino-acid polypeptide reads, in one-letter code: Ubiquinone biosynthesis O-methyltransferase (249 aa).

S-adenosyl-L-methionine is bound by residues Arg-41, Gly-72, Asp-93, and Met-136.

The protein belongs to the methyltransferase superfamily. UbiG/COQ3 family.

The catalysed reaction is a 3-demethylubiquinol + S-adenosyl-L-methionine = a ubiquinol + S-adenosyl-L-homocysteine + H(+). It carries out the reaction a 3-(all-trans-polyprenyl)benzene-1,2-diol + S-adenosyl-L-methionine = a 2-methoxy-6-(all-trans-polyprenyl)phenol + S-adenosyl-L-homocysteine + H(+). It functions in the pathway cofactor biosynthesis; ubiquinone biosynthesis. Functionally, O-methyltransferase that catalyzes the 2 O-methylation steps in the ubiquinone biosynthetic pathway. The polypeptide is Ubiquinone biosynthesis O-methyltransferase (Methylobacterium sp. (strain 4-46)).